A 487-amino-acid polypeptide reads, in one-letter code: Serine/threonine-protein kinase 4 (487 aa).

An N-acetylmethionine modification is found at Met-1. Position 3 is a phosphothreonine (Thr-3). Residues 30–281 (FDVLEKLGEG…ATQLLQHPFV (252 aa)) form the Protein kinase domain. Residues 36–44 (LGEGSYGSV) and Lys-59 contribute to the ATP site. The active-site Proton acceptor is Asp-149. At Thr-183 the chain carries Phosphothreonine; by autocatalysis. Phosphoserine is present on Ser-265. Residues 290 to 310 (LRDLINEAMDVKLKRQESQQR) adopt a coiled-coil conformation. The span at 303–312 (KRQESQQREV) shows a compositional bias: basic and acidic residues. The segment at 303-332 (KRQESQQREVDQDDEENSEEDEMDSGTMVR) is disordered. Residues 313-326 (DQDDEENSEEDEMD) are compositionally biased toward acidic residues. Ser-320 carries the phosphoserine modification. A phosphothreonine mark is found at Thr-340 and Thr-367. Position 387 is a phosphothreonine; by PKB/AKT1 (Thr-387). 2 positions are modified to phosphoserine: Ser-410 and Ser-414. Position 433 is a phosphotyrosine (Tyr-433). Positions 433–480 (YEFLKSWTVEDLQKRLLALDPMMEQEIEEIRQKYQSKRQPILDAIEAK) constitute an SARAH domain.

It belongs to the protein kinase superfamily. STE Ser/Thr protein kinase family. STE20 subfamily. Homodimer; mediated via the coiled-coil region. Interacts with NORE1, which inhibits autoactivation. Interacts with and stabilizes SAV1. Interacts with RASSF1. Interacts with FOXO3. Interacts with RASSF2 (via SARAH domain). Interacts with AR, PKB/AKT1, TNNI3 and SIRT1. Interacts with DLG5 (via PDZ domain 3). Interacts with MARK3 and SCRIB in the presence of DLG5. Mg(2+) is required as a cofactor. Post-translationally, autophosphorylated on serine and threonine residues. Phosphorylation at Thr-387 by PKB/AKT1, leads to inhibition of its: kinase activity, nuclear translocation and autophosphorylation at Thr-183. It also diminishes its cleavage by caspases and its ability to phosphorylate FOXO3. Proteolytically cleaved by caspase-3 during apoptosis at Asp-326 and Asp-349 resulting in a 37 kDa or a 39 kDa subunit respectively. The 39 kDa subunit is further cleaved into the 37 kDa form. Proteolytic cleavage results in kinase activation and nuclear translocation of the truncated form (MST1/N). It is less likely that cleavage at Asp-349 is a prerequisite for activation as this site is not conserved in the murine ortholog.

The protein localises to the cytoplasm. Its subcellular location is the nucleus. It carries out the reaction L-seryl-[protein] + ATP = O-phospho-L-seryl-[protein] + ADP + H(+). The enzyme catalyses L-threonyl-[protein] + ATP = O-phospho-L-threonyl-[protein] + ADP + H(+). Its activity is regulated as follows. Inhibited by the C-terminal non-catalytic region. Activated by caspase-cleavage. Full activation also requires homodimerization and autophosphorylation of Thr-183. Activated by RASSF1 which acts by preventing its dephosphorylation. Stress-activated, pro-apoptotic kinase which, following caspase-cleavage, enters the nucleus and induces chromatin condensation followed by internucleosomal DNA fragmentation. Key component of the Hippo signaling pathway which plays a pivotal role in organ size control and tumor suppression by restricting proliferation and promoting apoptosis. The core of this pathway is composed of a kinase cascade wherein STK3/MST2 and STK4/MST1, in complex with its regulatory protein SAV1, phosphorylates and activates LATS1/2 in complex with its regulatory protein MOB1, which in turn phosphorylates and inactivates YAP1 oncoprotein and WWTR1/TAZ. Phosphorylation of YAP1 by LATS2 inhibits its translocation into the nucleus to regulate cellular genes important for cell proliferation, cell death, and cell migration. STK3/MST2 and STK4/MST1 are required to repress proliferation of mature hepatocytes, to prevent activation of facultative adult liver stem cells (oval cells), and to inhibit tumor formation. Phosphorylates 'Ser-14' of histone H2B (H2BS14ph) during apoptosis. Phosphorylates FOXO3 upon oxidative stress, which results in its nuclear translocation and cell death initiation. Phosphorylates MOBKL1A, MOBKL1B and RASSF2. Phosphorylates TNNI3 (cardiac Tn-I) and alters its binding affinity to TNNC1 (cardiac Tn-C) and TNNT2 (cardiac Tn-T). Phosphorylates FOXO1 on 'Ser-212' and regulates its activation and stimulates transcription of PMAIP1 in a FOXO1-dependent manner. Phosphorylates SIRT1 and inhibits SIRT1-mediated p53/TP53 deacetylation, thereby promoting p53/TP53 dependent transcription and apoptosis upon DNA damage. Acts as an inhibitor of PKB/AKT1. Phosphorylates AR on 'Ser-650' and suppresses its activity by intersecting with PKB/AKT1 signaling and antagonizing formation of AR-chromatin complexes. In Macaca mulatta (Rhesus macaque), this protein is Serine/threonine-protein kinase 4 (STK4).